The chain runs to 417 residues: Serine hydroxymethyltransferase (417 aa).

Residues leucine 112 and 116–118 (GHL) contribute to the (6S)-5,6,7,8-tetrahydrofolate site. Lysine 221 is modified (N6-(pyridoxal phosphate)lysine). Glutamate 247 is a binding site for (6S)-5,6,7,8-tetrahydrofolate.

The protein belongs to the SHMT family. Homodimer. The cofactor is pyridoxal 5'-phosphate.

It localises to the cytoplasm. It catalyses the reaction (6R)-5,10-methylene-5,6,7,8-tetrahydrofolate + glycine + H2O = (6S)-5,6,7,8-tetrahydrofolate + L-serine. The protein operates within one-carbon metabolism; tetrahydrofolate interconversion. It functions in the pathway amino-acid biosynthesis; glycine biosynthesis; glycine from L-serine: step 1/1. Functionally, catalyzes the reversible interconversion of serine and glycine with tetrahydrofolate (THF) serving as the one-carbon carrier. This reaction serves as the major source of one-carbon groups required for the biosynthesis of purines, thymidylate, methionine, and other important biomolecules. Also exhibits THF-independent aldolase activity toward beta-hydroxyamino acids, producing glycine and aldehydes, via a retro-aldol mechanism. The chain is Serine hydroxymethyltransferase from Borreliella burgdorferi (strain ATCC 35210 / DSM 4680 / CIP 102532 / B31) (Borrelia burgdorferi).